Consider the following 294-residue polypeptide: 4-hydroxy-tetrahydrodipicolinate synthase (294 aa).

Position 45 (Thr-45) interacts with pyruvate. The active-site Proton donor/acceptor is the Tyr-133. The active-site Schiff-base intermediate with substrate is the Lys-161. Ile-203 lines the pyruvate pocket.

The protein belongs to the DapA family. In terms of assembly, homotetramer; dimer of dimers.

It is found in the cytoplasm. The catalysed reaction is L-aspartate 4-semialdehyde + pyruvate = (2S,4S)-4-hydroxy-2,3,4,5-tetrahydrodipicolinate + H2O + H(+). Its pathway is amino-acid biosynthesis; L-lysine biosynthesis via DAP pathway; (S)-tetrahydrodipicolinate from L-aspartate: step 3/4. Functionally, catalyzes the condensation of (S)-aspartate-beta-semialdehyde [(S)-ASA] and pyruvate to 4-hydroxy-tetrahydrodipicolinate (HTPA). In Buchnera aphidicola subsp. Acyrthosiphon pisum (strain APS) (Acyrthosiphon pisum symbiotic bacterium), this protein is 4-hydroxy-tetrahydrodipicolinate synthase.